A 102-amino-acid chain; its full sequence is uncharacterized protein (102 aa).

This is an uncharacterized protein from Methanothermococcus thermolithotrophicus (Methanococcus thermolithotrophicus).